We begin with the raw amino-acid sequence, 529 residues long: NADPH-dependent thioredoxin reductase 3 (529 aa).

The N-terminal 67 residues, 1 to 67, are a transit peptide targeting the chloroplast; it reads MAASPKIGIG…SSDSLRLRVS (67 aa). A disordered region spans residues 54–78; that stretch reads TRTRSSDSLRLRVSATANSPSSSSS. Low complexity predominate over residues 64–78; it reads LRVSATANSPSSSSS. Residues 91 to 94, 113 to 120, asparagine 133, valine 166, and cysteine 220 each bind FAD; these read SGPA and EGYQMGGV. A disulfide bridge connects residues cysteine 217 and cysteine 220. NADP(+)-binding residues include threonine 240, arginine 265, isoleucine 324, and tyrosine 344. Residues aspartate 364 and 371 to 374 each bind FAD; that span reads RQAV. An NADP(+)-binding site is contributed by arginine 371. Positions 403 to 529 constitute a Thioredoxin domain; that stretch reads PQTEEAKKEF…EYREFIEANK (127 aa). Catalysis depends on nucleophile residues cysteine 454 and cysteine 457. Residues cysteine 454 and cysteine 457 are joined by a disulfide bond.

It belongs to the class-II pyridine nucleotide-disulfide oxidoreductase family. In terms of assembly, may homodimerize. Interacts with the 2-Cys peroxiredoxin BAS1. The cofactor is FAD.

It is found in the plastid. Its subcellular location is the chloroplast. It carries out the reaction [thioredoxin]-dithiol + NADP(+) = [thioredoxin]-disulfide + NADPH + H(+). Its function is as follows. Thioredoxin reductase (TR) that exhibits both TR and thioredoxin (Trx) activities. Contains a C-terminal functional Trx domain. Functions as an electron donor for plastidial 2-Cys peroxiredoxins and participates in a NADPH-dependent hydrogen peroxide scavenging system in chloroplasts in the dark. Required for chlorophyll biosynthesis and biogenesis of the photosynthetic apparatus. Activates aerobic cyclase which converts Mg-protoporhyrin monomethyl ester into protochlorophyllide. Involved in a light-dependent regulation of starch biosynthesis by redox activation of the ADP-glucose pyrophosphorylase (AGPase), a central enzyme of starch synthesis. This Arabidopsis thaliana (Mouse-ear cress) protein is NADPH-dependent thioredoxin reductase 3.